Consider the following 351-residue polypeptide: UDP-3-O-acylglucosamine N-acyltransferase (351 aa).

The active-site Proton acceptor is the His-240.

It belongs to the transferase hexapeptide repeat family. LpxD subfamily. Homotrimer.

It catalyses the reaction a UDP-3-O-[(3R)-3-hydroxyacyl]-alpha-D-glucosamine + a (3R)-hydroxyacyl-[ACP] = a UDP-2-N,3-O-bis[(3R)-3-hydroxyacyl]-alpha-D-glucosamine + holo-[ACP] + H(+). The protein operates within bacterial outer membrane biogenesis; LPS lipid A biosynthesis. Its function is as follows. Catalyzes the N-acylation of UDP-3-O-acylglucosamine using 3-hydroxyacyl-ACP as the acyl donor. Is involved in the biosynthesis of lipid A, a phosphorylated glycolipid that anchors the lipopolysaccharide to the outer membrane of the cell. The sequence is that of UDP-3-O-acylglucosamine N-acyltransferase from Pseudomonas entomophila (strain L48).